The following is a 360-amino-acid chain: Photosystem II protein D1 (360 aa).

3 consecutive transmembrane segments (helical) span residues 29–46 (YIGWFGCLMFPTLLSAIS), 118–133 (HFFIGVCAYIGREWEL), and 142–156 (WICVAFSAPVAAAAA). His-118 serves as a coordination point for chlorophyll a. Tyr-126 contributes to the pheophytin a binding site. [CaMn4O5] cluster contacts are provided by Asp-170 and Glu-189. Residues 197 to 218 (FHMLGVAGVFGGSLFSAMHGSL) form a helical membrane-spanning segment. His-198 is a binding site for chlorophyll a. Residues His-215 and 264–265 (SF) each bind a quinone. Position 215 (His-215) interacts with Fe cation. Residue His-272 participates in Fe cation binding. The chain crosses the membrane as a helical span at residues 274–288 (FLGAWPVVGIWFTAM). [CaMn4O5] cluster is bound by residues His-332, Glu-333, Asp-342, and Ala-344. Residues 345–360 (AGESLPVALVAPAVAA) constitute a propeptide that is removed on maturation.

It belongs to the reaction center PufL/M/PsbA/D family. In terms of assembly, PSII is composed of 1 copy each of membrane proteins PsbA, PsbB, PsbC, PsbD, PsbE, PsbF, PsbH, PsbI, PsbJ, PsbK, PsbL, PsbM, PsbT, PsbX, PsbY, PsbZ, Psb30/Ycf12, at least 3 peripheral proteins of the oxygen-evolving complex and a large number of cofactors. It forms dimeric complexes. Requires The D1/D2 heterodimer binds P680, chlorophylls that are the primary electron donor of PSII, and subsequent electron acceptors. It shares a non-heme iron and each subunit binds pheophytin, quinone, additional chlorophylls, carotenoids and lipids. D1 provides most of the ligands for the Mn4-Ca-O5 cluster of the oxygen-evolving complex (OEC). There is also a Cl(-1) ion associated with D1 and D2, which is required for oxygen evolution. The PSII complex binds additional chlorophylls, carotenoids and specific lipids. as cofactor. Tyr-161 forms a radical intermediate that is referred to as redox-active TyrZ, YZ or Y-Z. In terms of processing, C-terminally processed by CTPA; processing is essential to allow assembly of the oxygen-evolving complex and thus photosynthetic growth.

The protein resides in the plastid. The protein localises to the chloroplast thylakoid membrane. The enzyme catalyses 2 a plastoquinone + 4 hnu + 2 H2O = 2 a plastoquinol + O2. Its function is as follows. Photosystem II (PSII) is a light-driven water:plastoquinone oxidoreductase that uses light energy to abstract electrons from H(2)O, generating O(2) and a proton gradient subsequently used for ATP formation. It consists of a core antenna complex that captures photons, and an electron transfer chain that converts photonic excitation into a charge separation. The D1/D2 (PsbA/PsbD) reaction center heterodimer binds P680, the primary electron donor of PSII as well as several subsequent electron acceptors. The polypeptide is Photosystem II protein D1 (Emiliania huxleyi (Coccolithophore)).